The following is a 227-amino-acid chain: Large ribosomal subunit protein uL3 (227 aa).

Belongs to the universal ribosomal protein uL3 family. As to quaternary structure, part of the 50S ribosomal subunit. Forms a cluster with proteins L14 and L19.

Its function is as follows. One of the primary rRNA binding proteins, it binds directly near the 3'-end of the 23S rRNA, where it nucleates assembly of the 50S subunit. This Leuconostoc citreum (strain KM20) protein is Large ribosomal subunit protein uL3.